The following is a 907-amino-acid chain: Cytochrome b561, DM13 and DOMON domain-containing protein At5g54830 (907 aa).

A signal peptide spans 1 to 24 (MCDQRPNLLGSLVLLGFFIFFVNG). In terms of domain architecture, DM13 spans 31 to 139 (SSLIGHESEF…ASDFGHVLLS (109 aa)). The tract at residues 144 to 172 (SDTSKAESPPSESNDVAPGKSNNSEPFKA) is disordered. The segment covering 153 to 168 (PSESNDVAPGKSNNSE) has biased composition (polar residues). 2 DOMON domains span residues 184–329 (DKYR…WALG) and 524–645 (QQVK…WAMG). The 198-residue stretch at 653–850 (LTERNMHSVT…CVVTVAYLEY (198 aa)) folds into the Cytochrome b561 domain. A helical transmembrane segment spans residues 685–705 (VLGVHGFMMFLAWGILLPGGI). Heme b is bound by residues His-689 and His-723. 4 helical membrane passes run 730–750 (GLAI…GFSF), 754–774 (HVKF…NAWL), 795–815 (SHSI…FTGM), and 829–849 (GLNL…AYLE). Residues His-754 and His-796 each contribute to the heme b site. A compositionally biased stretch (basic and acidic residues) spans 884–897 (GGFRDKDDEDRNGG). The disordered stretch occupies residues 884–907 (GGFRDKDDEDRNGGRMEIQLEPLK).

The cofactor is heme b.

The protein resides in the membrane. May act as a catecholamine-responsive trans-membrane electron transporter. The polypeptide is Cytochrome b561, DM13 and DOMON domain-containing protein At5g54830 (Arabidopsis thaliana (Mouse-ear cress)).